Consider the following 807-residue polypeptide: Glycerol-3-phosphate acyltransferase (807 aa).

An HXXXXD motif motif is present at residues Cys-308–Met-313.

This sequence belongs to the GPAT/DAPAT family.

It localises to the cell inner membrane. The enzyme catalyses sn-glycerol 3-phosphate + an acyl-CoA = a 1-acyl-sn-glycero-3-phosphate + CoA. It participates in phospholipid metabolism; CDP-diacylglycerol biosynthesis; CDP-diacylglycerol from sn-glycerol 3-phosphate: step 1/3. This Shewanella baltica (strain OS195) protein is Glycerol-3-phosphate acyltransferase.